A 241-amino-acid polypeptide reads, in one-letter code: Caffeoyl-CoA O-methyltransferase (241 aa).

Residue Lys-14 participates in substrate binding. S-adenosyl-L-methionine contacts are provided by residues Thr-58, Glu-80, 82–83 (GV), Ser-88, Asp-106, and Ala-135. Asp-158 contributes to the substrate binding site. Asp-158 provides a ligand contact to a divalent metal cation. Residue Asp-160 participates in S-adenosyl-L-methionine binding. Asp-184 and Asn-185 together coordinate a divalent metal cation.

The protein belongs to the class I-like SAM-binding methyltransferase superfamily. Cation-dependent O-methyltransferase family. CCoAMT subfamily. A divalent metal cation is required as a cofactor.

It carries out the reaction (E)-caffeoyl-CoA + S-adenosyl-L-methionine = (E)-feruloyl-CoA + S-adenosyl-L-homocysteine + H(+). The protein operates within aromatic compound metabolism; phenylpropanoid biosynthesis. Its function is as follows. Methylates caffeoyl-CoA to feruloyl-CoA and 5-hydroxyferuloyl-CoA to sinapoyl-CoA. Plays a role in the synthesis of feruloylated polysaccharides. Involved in the reinforcement of the plant cell wall. Also involved in the responding to wounding or pathogen challenge by the increased formation of cell wall-bound ferulic acid polymers. This Stellaria longipes (Longstalk starwort) protein is Caffeoyl-CoA O-methyltransferase.